A 395-amino-acid polypeptide reads, in one-letter code: NAD(P)H-quinone oxidoreductase subunit H, chloroplastic (395 aa).

Belongs to the complex I 49 kDa subunit family. In terms of assembly, NDH is composed of at least 16 different subunits, 5 of which are encoded in the nucleus.

Its subcellular location is the plastid. The protein localises to the chloroplast thylakoid membrane. It catalyses the reaction a plastoquinone + NADH + (n+1) H(+)(in) = a plastoquinol + NAD(+) + n H(+)(out). The enzyme catalyses a plastoquinone + NADPH + (n+1) H(+)(in) = a plastoquinol + NADP(+) + n H(+)(out). Its function is as follows. NDH shuttles electrons from NAD(P)H:plastoquinone, via FMN and iron-sulfur (Fe-S) centers, to quinones in the photosynthetic chain and possibly in a chloroplast respiratory chain. The immediate electron acceptor for the enzyme in this species is believed to be plastoquinone. Couples the redox reaction to proton translocation, and thus conserves the redox energy in a proton gradient. In Citrus sinensis (Sweet orange), this protein is NAD(P)H-quinone oxidoreductase subunit H, chloroplastic.